Reading from the N-terminus, the 410-residue chain is Peptidase T (410 aa).

H78 is a binding site for Zn(2+). Residue D80 is part of the active site. Residue D140 participates in Zn(2+) binding. The active-site Proton acceptor is the E173. Positions 174, 196, and 379 each coordinate Zn(2+).

It belongs to the peptidase M20B family. It depends on Zn(2+) as a cofactor.

It is found in the cytoplasm. It carries out the reaction Release of the N-terminal residue from a tripeptide.. In terms of biological role, cleaves the N-terminal amino acid of tripeptides. This Pectobacterium atrosepticum (strain SCRI 1043 / ATCC BAA-672) (Erwinia carotovora subsp. atroseptica) protein is Peptidase T.